A 499-amino-acid polypeptide reads, in one-letter code: MKHSLNALLIFLIITSAWGGSKGPLDQLEKGGETAQSADPQWEQLNNKNLSMPLLPADFHKENTVTNDWIPEGEEDDDYLDLEKIFSEDDDYIDIVDSLSVSPTDSDVSAGNILQLFHGKSRIQRLNILNAKFAFNLYRVLKDQVNTFDNIFIAPVGISTAMGMISLGLKGETHEQVHSILHFKDFVNASSKYEITTIHNLFRKLTHRLFRRNFGYTLRSVNDLYIQKQFPILLDFKTKVREYYFAEAQIADFSDPAFISKTNNHIMKLTKGLIKDALENIDPATQMMILNCIYFKGSWVNKFPVEMTHNHNFRLNEREVVKVSMMQTKGNFLAANDQELDCDILQLEYVGGISMLIVVPHKMSGMKTLEAQLTPRVVERWQKSMTNRTREVLLPKFKLEKNYNLVESLKLMGIRMLFDKNGNMAGISDQRIAIDLFKHQGTITVNEEGTQATTVTTVGFMPLSTQVRFTVDRPFLFLIYEHRTSCLLFMGRVANPSRS.

Positions 1–19 are cleaved as a signal peptide; that stretch reads MKHSLNALLIFLIITSAWG. Serine 37 is modified (phosphoserine; by FAM20C). The N-linked (GlcNAc...) (complex) asparagine glycan is linked to asparagine 49. The chemotactic activity stretch occupies residues 68–79; it reads DWIPEGEEDDDY. 2 repeat units span residues 73–83 and 87–97. The segment at 73–97 is 2 X 11 AA approximate repeats, Asp/Glu-rich (acidic) (hirudin-like); sequence GEEDDDYLDLEKIFSEDDDYIDIVD. Sulfotyrosine occurs at positions 79 and 92. Asparagine 188 carries N-linked (GlcNAc...) asparagine glycosylation. Residues 192-212 form a glycosaminoglycan-binding site region; the sequence is KYEITTIHNLFRKLTHRLFRR. A glycan (N-linked (GlcNAc...) asparagine) is linked at asparagine 387.

Belongs to the serpin family. In terms of processing, phosphorylated by FAM20C in the extracellular medium. In terms of tissue distribution, expressed predominantly in liver. Also present in plasma. Expressed in plasma (at protein level). Expressed in liver.

In terms of biological role, thrombin inhibitor activated by the glycosaminoglycans, heparin or dermatan sulfate. In the presence of the latter, HC-II becomes the predominant thrombin inhibitor in place of antithrombin III (AT-III). Also inhibits chymotrypsin, but in a glycosaminoglycan-independent manner. Functionally, peptides at the N-terminal of HC-II have chemotactic activity for both monocytes and neutrophils. Shows negligible inhibition, in vitro, of thrombin and tPA and no inhibition of factor Xa, in vitro. This Homo sapiens (Human) protein is Heparin cofactor 2 (SERPIND1).